Consider the following 363-residue polypeptide: MSDVNASLVDGKKILVTGGAGFIGCAISERLAARASRYVVMDNLHPQIHANAVRPVALHEKAELVVADVTDAGAWDALLSDFQPEIIIHLAAETGTGQSLTEASRHALVNVVGTTRLTDAIVKHGIAVEHILLTSSRAVYGEGAWQKADGTIVYPGQRGRAQLEAAQWDFPGMTMLPSRADRTEPRPTSVYGATKLAQEHVLRAWSLATKTPLSILRLQNVYGPGQSLTNSYTGIVALFSRLAREKKVIPLYEDGNVTRDFVSIDDVADAIVATLAREPEALSLFDIGSGQATSILDMARIIAAHYGAPEPQVNGAFRDGDVRHAACDLSESLANLGWKPQWSLERGIGELQTWIAQELDRKN.

NAD(+) is bound by residues 18-24, 68-69, and 90-94; these read GGAGFIG, DV, and LAAET. Substrate contacts are provided by Ser136 and Tyr191. 2 residues coordinate NAD(+): Tyr191 and Lys195. Tyr191 serves as the catalytic Proton acceptor. Asn220 and Arg259 together coordinate substrate.

Belongs to the NAD(P)-dependent epimerase/dehydratase family. NAD(+) serves as cofactor.

It catalyses the reaction dTDP-6-deoxy-beta-L-talose = dTDP-beta-L-rhamnose. It functions in the pathway bacterial outer membrane biogenesis; LPS O-antigen biosynthesis. Its function is as follows. Catalyzes the interconvertion of dTDP-6-deoxy-L-talose and dTDP-L-rhamnose. The equilibrium is strongly toward dTDP-L-rhamnose. In Burkholderia thailandensis (strain ATCC 700388 / DSM 13276 / CCUG 48851 / CIP 106301 / E264), this protein is dTDP-L-rhamnose 4-epimerase (wbiB).